The primary structure comprises 170 residues: Peptide deformylase (170 aa).

Residues Cys-94 and His-136 each coordinate Fe cation. Glu-137 is an active-site residue. His-140 serves as a coordination point for Fe cation.

Belongs to the polypeptide deformylase family. Fe(2+) is required as a cofactor.

It carries out the reaction N-terminal N-formyl-L-methionyl-[peptide] + H2O = N-terminal L-methionyl-[peptide] + formate. Its function is as follows. Removes the formyl group from the N-terminal Met of newly synthesized proteins. Requires at least a dipeptide for an efficient rate of reaction. N-terminal L-methionine is a prerequisite for activity but the enzyme has broad specificity at other positions. This is Peptide deformylase from Xylella fastidiosa (strain M12).